A 176-amino-acid chain; its full sequence is NAD(P)H-quinone oxidoreductase subunit 6, chloroplastic (176 aa).

5 helical membrane-spanning segments follow: residues 10-30, 32-52, 63-83, 92-112, and 152-172; these read FILV…VFFT, TIFS…FYIL, LLIY…FMNG, VWTV…ISQI, and FFLP…GAIF.

This sequence belongs to the complex I subunit 6 family. In terms of assembly, NDH is composed of at least 16 different subunits, 5 of which are encoded in the nucleus.

It is found in the plastid. It localises to the chloroplast thylakoid membrane. The enzyme catalyses a plastoquinone + NADH + (n+1) H(+)(in) = a plastoquinol + NAD(+) + n H(+)(out). It catalyses the reaction a plastoquinone + NADPH + (n+1) H(+)(in) = a plastoquinol + NADP(+) + n H(+)(out). Functionally, NDH shuttles electrons from NAD(P)H:plastoquinone, via FMN and iron-sulfur (Fe-S) centers, to quinones in the photosynthetic chain and possibly in a chloroplast respiratory chain. The immediate electron acceptor for the enzyme in this species is believed to be plastoquinone. Couples the redox reaction to proton translocation, and thus conserves the redox energy in a proton gradient. The polypeptide is NAD(P)H-quinone oxidoreductase subunit 6, chloroplastic (ndhG) (Phaseolus vulgaris (Kidney bean)).